The chain runs to 1414 residues: Protein KATNIP homolog (1414 aa).

7 disordered regions span residues 1 to 32 (MHGK…DEKH), 80 to 116 (QQST…PGKI), 139 to 158 (GPNT…NEDQ), 712 to 731 (VSAT…NDLT), 756 to 783 (SSSS…TFTN), 823 to 861 (KMDN…SEKY), and 924 to 943 (QQQK…SLMP). Composition is skewed to basic and acidic residues over residues 10 to 32 (RKND…DEKH) and 86 to 101 (LARE…DDGC). Positions 147 to 158 (DFESDDDMNEDQ) are enriched in acidic residues. Composition is skewed to polar residues over residues 832-843 (NFSNQSSYNSDR) and 924-940 (QQQK…NGSS).

The protein resides in the cytoplasm. It localises to the cytoskeleton. Its subcellular location is the cilium axoneme. It is found in the cilium basal body. Its function is as follows. May control cilium integrity. The protein is Protein KATNIP homolog of Xenopus laevis (African clawed frog).